Consider the following 151-residue polypeptide: 3-dehydroquinate dehydratase 1 (151 aa).

The active-site Proton acceptor is the Tyr-23. Residues Asn-75, His-81, and Asp-88 each coordinate substrate. His-101 serves as the catalytic Proton donor. Residues 102-103 (LS) and Arg-112 each bind substrate.

This sequence belongs to the type-II 3-dehydroquinase family. As to quaternary structure, homododecamer.

It catalyses the reaction 3-dehydroquinate = 3-dehydroshikimate + H2O. It functions in the pathway metabolic intermediate biosynthesis; chorismate biosynthesis; chorismate from D-erythrose 4-phosphate and phosphoenolpyruvate: step 3/7. Functionally, catalyzes a trans-dehydration via an enolate intermediate. This is 3-dehydroquinate dehydratase 1 (aroQ1) from Pseudomonas putida (strain ATCC 47054 / DSM 6125 / CFBP 8728 / NCIMB 11950 / KT2440).